Reading from the N-terminus, the 210-residue chain is Cell division protein SepF (210 aa).

The protein belongs to the SepF family. Homodimer. Interacts with FtsZ.

Its subcellular location is the cytoplasm. Cell division protein that is part of the divisome complex and is recruited early to the Z-ring. Probably stimulates Z-ring formation, perhaps through the cross-linking of FtsZ protofilaments. Its function overlaps with FtsA. This is Cell division protein SepF from Mycobacterium leprae (strain Br4923).